Consider the following 249-residue polypeptide: AA9 family lytic polysaccharide monooxygenase A (249 aa).

A signal peptide spans 1–21; it reads MALSKIAALSTILASASLVAG. H22 lines the Cu(2+) pocket. Position 22 is a methylhistidine (H22). N-linked (GlcNAc...) asparagine glycosylation is found at N34 and N80. Cystine bridges form between C77-C199 and C118-C122. A Cu(2+)-binding site is contributed by H107. O2-binding residues include H185 and Q194. Y196 is a Cu(2+) binding site.

Belongs to the polysaccharide monooxygenase AA9 family. Requires Cu(2+) as cofactor. Post-translationally, the catalytically essential N-terminal histidine His-22 is post-translationally modified by methylation to prevent protonation of the histidine side chain, and protect the critical active site of the enzyme from oxidative damage.

The protein localises to the secreted. The enzyme catalyses [(1-&gt;4)-beta-D-glucosyl]n+m + reduced acceptor + O2 = 4-dehydro-beta-D-glucosyl-[(1-&gt;4)-beta-D-glucosyl]n-1 + [(1-&gt;4)-beta-D-glucosyl]m + acceptor + H2O.. Its function is as follows. Lytic polysaccharide monooxygenase (LPMO) that exhibits a mixed C1/C4 oxidative cleavage activity on cellulose and xyloglucan. Catalysis by LPMOs requires the reduction of the active-site copper from Cu(II) to Cu(I) by a reducing agent and H(2)O(2) or O(2) as a cosubstrate. Shows a higher boosting effect with cellulases on the enzymatic saccharification of complex lignocellulosic substrates associated with xyloglucan than on the lignocellulosic substrates without xyloglucan. The oxidative cleavage of xyloglucan by LPMO9A may facilitate to open up the sterical hindrance of cellulose by xyloglucan and thereby increase accessibility for cellulase to lignocellulosic substrates. The protein is AA9 family lytic polysaccharide monooxygenase A of Penicillium parvum (Eupenicillium parvum).